Consider the following 297-residue polypeptide: Lipoyl synthase (297 aa).

7 residues coordinate [4Fe-4S] cluster: Cys-34, Cys-39, Cys-45, Cys-60, Cys-64, Cys-67, and Ser-273. A Radical SAM core domain is found at 46–262; it reads WNKRHATVMI…KYVAYSKGFL (217 aa).

The protein belongs to the radical SAM superfamily. Lipoyl synthase family. The cofactor is [4Fe-4S] cluster.

Its subcellular location is the cytoplasm. It catalyses the reaction [[Fe-S] cluster scaffold protein carrying a second [4Fe-4S](2+) cluster] + N(6)-octanoyl-L-lysyl-[protein] + 2 oxidized [2Fe-2S]-[ferredoxin] + 2 S-adenosyl-L-methionine + 4 H(+) = [[Fe-S] cluster scaffold protein] + N(6)-[(R)-dihydrolipoyl]-L-lysyl-[protein] + 4 Fe(3+) + 2 hydrogen sulfide + 2 5'-deoxyadenosine + 2 L-methionine + 2 reduced [2Fe-2S]-[ferredoxin]. It participates in protein modification; protein lipoylation via endogenous pathway; protein N(6)-(lipoyl)lysine from octanoyl-[acyl-carrier-protein]: step 2/2. In terms of biological role, catalyzes the radical-mediated insertion of two sulfur atoms into the C-6 and C-8 positions of the octanoyl moiety bound to the lipoyl domains of lipoate-dependent enzymes, thereby converting the octanoylated domains into lipoylated derivatives. The polypeptide is Lipoyl synthase (Ehrlichia chaffeensis (strain ATCC CRL-10679 / Arkansas)).